Reading from the N-terminus, the 276-residue chain is Alpha N-terminal protein methyltransferase 1 (276 aa).

S-adenosyl-L-methionine contacts are provided by residues Gly96, Arg101, 118–120 (EPV), 149–150 (LQ), and Gln165.

This sequence belongs to the methyltransferase superfamily. NTM1 family.

The catalysed reaction is N-terminal L-alanyl-L-prolyl-L-lysyl-[protein] + 3 S-adenosyl-L-methionine = N-terminal N,N,N-trimethyl-L-alanyl-L-prolyl-L-lysyl-[protein] + 3 S-adenosyl-L-homocysteine + 3 H(+). The enzyme catalyses N-terminal L-seryl-L-prolyl-L-lysyl-[protein] + 3 S-adenosyl-L-methionine = N-terminal N,N,N-trimethyl-L-seryl-L-prolyl-L-lysyl-[protein] + 3 S-adenosyl-L-homocysteine + 3 H(+). It carries out the reaction N-terminal L-prolyl-L-prolyl-L-lysyl-[protein] + 2 S-adenosyl-L-methionine = N-terminal N,N-dimethyl-L-prolyl-L-prolyl-L-lysyl-[protein] + 2 S-adenosyl-L-homocysteine + 2 H(+). Functionally, alpha-N-methyltransferase that methylates the N-terminus of target proteins containing the N-terminal motif [Ala/Pro/Ser]-Pro-Lys when the initiator Met is cleaved. Specifically catalyzes mono-, di- or tri-methylation of exposed alpha-amino group of Ala or Ser residue in the [Ala/Ser]-Pro-Lys motif and mono- or di-methylation of Pro in the Pro-Pro-Lys motif. In Arabidopsis thaliana (Mouse-ear cress), this protein is Alpha N-terminal protein methyltransferase 1.